Here is a 196-residue protein sequence, read N- to C-terminus: Crossover junction endodeoxyribonuclease RuvC (196 aa).

Catalysis depends on residues Asp23, Glu83, and His156. Mg(2+) contacts are provided by Asp23, Glu83, and His156.

It belongs to the RuvC family. As to quaternary structure, homodimer which binds Holliday junction (HJ) DNA. The HJ becomes 2-fold symmetrical on binding to RuvC with unstacked arms; it has a different conformation from HJ DNA in complex with RuvA. In the full resolvosome a probable DNA-RuvA(4)-RuvB(12)-RuvC(2) complex forms which resolves the HJ. The cofactor is Mg(2+).

It is found in the cytoplasm. The enzyme catalyses Endonucleolytic cleavage at a junction such as a reciprocal single-stranded crossover between two homologous DNA duplexes (Holliday junction).. Functionally, the RuvA-RuvB-RuvC complex processes Holliday junction (HJ) DNA during genetic recombination and DNA repair. Endonuclease that resolves HJ intermediates. Cleaves cruciform DNA by making single-stranded nicks across the HJ at symmetrical positions within the homologous arms, yielding a 5'-phosphate and a 3'-hydroxyl group; requires a central core of homology in the junction. The consensus cleavage sequence is 5'-(A/T)TT(C/G)-3'. Cleavage occurs on the 3'-side of the TT dinucleotide at the point of strand exchange. HJ branch migration catalyzed by RuvA-RuvB allows RuvC to scan DNA until it finds its consensus sequence, where it cleaves and resolves the cruciform DNA. The polypeptide is Crossover junction endodeoxyribonuclease RuvC (Treponema pallidum (strain Nichols)).